Reading from the N-terminus, the 722-residue chain is Ribosomal RNA large subunit methyltransferase K/L (722 aa).

The THUMP domain occupies Ile-43 to Leu-154.

It belongs to the methyltransferase superfamily. RlmKL family.

It localises to the cytoplasm. The enzyme catalyses guanosine(2445) in 23S rRNA + S-adenosyl-L-methionine = N(2)-methylguanosine(2445) in 23S rRNA + S-adenosyl-L-homocysteine + H(+). The catalysed reaction is guanosine(2069) in 23S rRNA + S-adenosyl-L-methionine = N(2)-methylguanosine(2069) in 23S rRNA + S-adenosyl-L-homocysteine + H(+). Its function is as follows. Specifically methylates the guanine in position 2445 (m2G2445) and the guanine in position 2069 (m7G2069) of 23S rRNA. The polypeptide is Ribosomal RNA large subunit methyltransferase K/L (Magnetococcus marinus (strain ATCC BAA-1437 / JCM 17883 / MC-1)).